We begin with the raw amino-acid sequence, 109 residues long: Tetraspanin-31 (109 aa).

Over 1–12 (MVCGGFACSKNA) the chain is Cytoplasmic. The helical transmembrane segment at 13–33 (LCALNVVYMLVGLLLIGVAAW) threads the bilayer. Residues 34–44 (AKGLGLVSSIH) are Extracellular-facing. Residues 45–65 (IIGGVIAVGVFLLLIAVAGLV) traverse the membrane as a helical segment. The Cytoplasmic portion of the chain corresponds to 66–72 (GAVNHHQ). A helical membrane pass occupies residues 73 to 93 (VLLFFYMIILGLVFIFQFGIS). At 94 to 109 (CSCLAINLSKQAGIIN) the chain is on the extracellular side. Asn100 carries an N-linked (GlcNAc...) asparagine glycan.

The protein belongs to the tetraspanin (TM4SF) family.

The protein resides in the membrane. The polypeptide is Tetraspanin-31 (TSPAN31) (Sus scrofa (Pig)).